Here is a 60-residue protein sequence, read N- to C-terminus: Mastoparan-VT4 (60 aa).

Residues 1–27 (MKNPILILFTAFIALLGFFGMSAEALA) form the signal peptide. 4 AXPX repeats span residues 27 to 30 (ADPK), 31 to 34 (ADPL), 35 to 38 (AGPN), and 41 to 44 (ADPE). Positions 28 to 45 (DPKADPLAGPNPDADPEA) are excised as a propeptide. Leu-59 carries the post-translational modification Leucine amide.

Belongs to the MCD family. Mastoparan subfamily. As to expression, expressed by the venom gland.

It localises to the secreted. Functionally, the synthetic peptide shows antimicrobial activities against Gram-negative bacteria (but not against all strains tested), Gram-positive bacteria (not all strains tested) and the fungi C.albicans and C.parapsilosis. Exhibits little hemolytic activity against washed human erythrocytes. The chain is Mastoparan-VT4 from Vespa tropica (Greater banded hornet).